Reading from the N-terminus, the 79-residue chain is Small ribosomal subunit protein bS21 (79 aa).

The tract at residues Ala58–Arg79 is disordered.

It belongs to the bacterial ribosomal protein bS21 family.

The protein is Small ribosomal subunit protein bS21 of Beijerinckia indica subsp. indica (strain ATCC 9039 / DSM 1715 / NCIMB 8712).